The primary structure comprises 222 residues: MLPHGLIVSCQALADEPLHSSFIMSKMALAAYEGGAVGIRANTKEDILAIKETVDLPVIGIVKRDYDHSDVFITATSKEVDELIESQCEVIALDATLQQRPKETLDELVSYIRTHAPNVEIMADIATVEEAKNAARLGFDYIGTTLHGYTSYTQGQLLYQNDFQFLKDVLQSVDAKVIAEGNVITPDMYKRVMDLGVHCSVVGGAITRPKEITKRFVQVMED.

Belongs to the NanE family.

The enzyme catalyses an N-acyl-D-glucosamine 6-phosphate = an N-acyl-D-mannosamine 6-phosphate. It functions in the pathway amino-sugar metabolism; N-acetylneuraminate degradation; D-fructose 6-phosphate from N-acetylneuraminate: step 3/5. Converts N-acetylmannosamine-6-phosphate (ManNAc-6-P) to N-acetylglucosamine-6-phosphate (GlcNAc-6-P). The chain is Putative N-acetylmannosamine-6-phosphate 2-epimerase from Staphylococcus aureus (strain Mu3 / ATCC 700698).